The chain runs to 233 residues: Lipoprotein-releasing system ATP-binding protein LolD (233 aa).

Residues 6 to 233 form the ABC transporter domain; the sequence is LQCDNLCKRY…TAELSLMGAE (228 aa). 42 to 49 provides a ligand contact to ATP; that stretch reads GSSGSGKS.

It belongs to the ABC transporter superfamily. Lipoprotein translocase (TC 3.A.1.125) family. In terms of assembly, the complex is composed of two ATP-binding proteins (LolD) and two transmembrane proteins (LolC and LolE).

The protein resides in the cell inner membrane. In terms of biological role, part of the ABC transporter complex LolCDE involved in the translocation of mature outer membrane-directed lipoproteins, from the inner membrane to the periplasmic chaperone, LolA. Responsible for the formation of the LolA-lipoprotein complex in an ATP-dependent manner. The chain is Lipoprotein-releasing system ATP-binding protein LolD from Salmonella choleraesuis (strain SC-B67).